Here is a 419-residue protein sequence, read N- to C-terminus: DNA ligase (419 aa).

The interval 1–120 is NTD; the sequence is MLSQFPGQCS…ARQKRGAHTN (120 aa). Positions 121–317 are AD domain; sequence RGMIPPMLVK…NYHSPHLAKL (197 aa). ATP is bound by residues His149, Lys151, Glu203, and Phe232. Residue Lys151 is the N6-AMP-lysine intermediate of the active site. Glu203 is an a divalent metal cation binding site. Residue Glu291 participates in a divalent metal cation binding. 2 residues coordinate ATP: Ile294 and Lys316. The segment at 318–419 is OB domain; that stretch reads KPLLDAEFIL…REPINVLEII (102 aa).

The protein belongs to the ATP-dependent DNA ligase family. Requires a divalent metal cation as cofactor.

Its subcellular location is the virion. The catalysed reaction is ATP + (deoxyribonucleotide)n-3'-hydroxyl + 5'-phospho-(deoxyribonucleotide)m = (deoxyribonucleotide)n+m + AMP + diphosphate.. In terms of biological role, very low-fidelity DNA ligase that seals nicks in double-stranded DNA during DNA repair. Together with the viral repair DNA polymerase X, fills the single nucleotide gaps generated by the AP endonuclease. It is not essential for viral replication and recombination. Displays a very low adenylation activity towards DNA with 3'-dideoxy- or 3'-amino-terminated nicks compared to regular nick DNA. The polypeptide is DNA ligase (LIG) (Ornithodoros (relapsing fever ticks)).